Here is a 397-residue protein sequence, read N- to C-terminus: Probable N-succinyldiaminopimelate aminotransferase DapC (397 aa).

Pyridoxal 5'-phosphate contacts are provided by residues 109 to 110 and 218 to 222; these read GS and DGMAE. N6-(pyridoxal phosphate)lysine is present on Lys-232.

The protein belongs to the class-III pyridoxal-phosphate-dependent aminotransferase family. In terms of assembly, homodimer. The cofactor is pyridoxal 5'-phosphate.

Its subcellular location is the cytoplasm. The catalysed reaction is N-succinyl-(2S,6S)-2,6-diaminopimelate + 2-oxoglutarate = (S)-2-succinylamino-6-oxoheptanedioate + L-glutamate. Its pathway is amino-acid biosynthesis; L-lysine biosynthesis via DAP pathway; LL-2,6-diaminopimelate from (S)-tetrahydrodipicolinate (succinylase route): step 2/3. Functionally, involved in the lysine biosynthetic pathways. It catalyzes the transfer of an amino group from L-glutamate to N-succinyl-2-l-amino-6-oxoheptanedioate (N-succinyl-2-l-amino-6-ketopimelate) in a PLP-dependent reaction, yielding as products N-succinyl-l-2,6-diaminoheptanedioate (N-succinyl-diaminopimelate) and 2-oxoglutarate. This chain is Probable N-succinyldiaminopimelate aminotransferase DapC (dapC), found in Mycobacterium tuberculosis (strain CDC 1551 / Oshkosh).